A 234-amino-acid polypeptide reads, in one-letter code: Proteasome subunit alpha (234 aa).

It belongs to the peptidase T1A family. The 20S proteasome core is composed of 14 alpha and 14 beta subunits that assemble into four stacked heptameric rings, resulting in a barrel-shaped structure. The two inner rings, each composed of seven catalytic beta subunits, are sandwiched by two outer rings, each composed of seven alpha subunits. The catalytic chamber with the active sites is on the inside of the barrel. Has a gated structure, the ends of the cylinder being occluded by the N-termini of the alpha-subunits. Is capped by the proteasome-associated ATPase, ARC.

It localises to the cytoplasm. It functions in the pathway protein degradation; proteasomal Pup-dependent pathway. Its activity is regulated as follows. The formation of the proteasomal ATPase ARC-20S proteasome complex, likely via the docking of the C-termini of ARC into the intersubunit pockets in the alpha-rings, may trigger opening of the gate for substrate entry. Interconversion between the open-gate and close-gate conformations leads to a dynamic regulation of the 20S proteasome proteolysis activity. Component of the proteasome core, a large protease complex with broad specificity involved in protein degradation. In Acidothermus cellulolyticus (strain ATCC 43068 / DSM 8971 / 11B), this protein is Proteasome subunit alpha.